A 332-amino-acid chain; its full sequence is MPSEAESSANSAPATPPPPPNFWGTMPEEEYYTSQGVRNSKSYFETPNGKLFTQSFLPLDGEIKGTVYMSHGYGSDTSWMFQKICMSFSSWGYAVFAADLLGHGRSDGIRCYMGDMEKVAATSLAFFKHVRCSDPYKDLPAFLFGESMGGLVTLLMYFQSEPETWTGLMFSAPLFVIPEDMKPSKAHLFAYGLLFGLADTWAAMPDNKMVGKAIKDPEKLKIIASNPQRYTGKPRVGTMRELLRKTQYVQENFGKVTIPVFTAHGTADGVTCPTSSKLLYEKASSADKTLKIYEGMYHSLIQGEPDENAEIVLKDMREWIDEKVKKYGSKTA.

Residues 1–13 are compositionally biased toward low complexity; that stretch reads MPSEAESSANSAP. The disordered stretch occupies residues 1 to 26; sequence MPSEAESSANSAPATPPPPPNFWGTM. The active-site Nucleophile is S147. Residues D268 and H298 each act as charge relay system in the active site.

It belongs to the AB hydrolase superfamily. Monoacylglycerol lipase family. As to quaternary structure, interacts with ACBP2. As to expression, expressed in vasculature of roots and leaves, stems, flowers and siliques.

The protein localises to the cell membrane. It catalyses the reaction 5-O-[(E)-caffeoyl]-shikimate + H2O = shikimate + (E)-caffeate + H(+). Esterase involved in the biosynthesis of lignin. Hydrolyzes caffeoylshikimate into caffeate and shikimate. Together with 4-coumarate--CoA ligase (4CL), acts on an alternative reaction for the formation of caffeoyl-CoA and bypasses the second reaction of shikimate O-hydroxycinnamoyltransferase (HST). Also accepts 4-coumaroylshikimate as substrate, but with lower activity. According to PubMed:20345607 and PubMed:22915575, possesses monoacylglycerol O-acyltransferase, monoacylglycerol lipase and lysophospholipase activities in vitro. With the association of ACBP2, may promote the degradation of lysophosphatidylcholine and detoxify the peroxidized membrane in response to cadmium-induced oxidative stress. However these results require additional confirmation in vivo. This is Caffeoylshikimate esterase (CSE) from Arabidopsis thaliana (Mouse-ear cress).